The sequence spans 118 residues: Holo-[acyl-carrier-protein] synthase (118 aa).

Mg(2+) contacts are provided by Asp5 and Glu50.

This sequence belongs to the P-Pant transferase superfamily. AcpS family. Mg(2+) is required as a cofactor.

Its subcellular location is the cytoplasm. It catalyses the reaction apo-[ACP] + CoA = holo-[ACP] + adenosine 3',5'-bisphosphate + H(+). Transfers the 4'-phosphopantetheine moiety from coenzyme A to a Ser of acyl-carrier-protein. This is Holo-[acyl-carrier-protein] synthase from Wolinella succinogenes (strain ATCC 29543 / DSM 1740 / CCUG 13145 / JCM 31913 / LMG 7466 / NCTC 11488 / FDC 602W) (Vibrio succinogenes).